The sequence spans 548 residues: Transcriptional adapter ADA2a (548 aa).

Positions 1–30 (MGRSKLASRPAEEDLNPGKSKRKKISLGPE) are disordered. The ZZ-type zinc finger occupies 48–104 (PGLYCCNYCDKDLSGLVRFKCAVCMDFDLCVECFSVGVELNRHKNSHPYRVMDNLSF). Residues C53, C56, C68, C71, C77, C80, H90, and H94 each contribute to the Zn(2+) site. The 53-residue stretch at 106 to 158 (LVTSDWNADEEILLLEAIATYGFGNWKEVADHVGSKTTTECIKHFNSAYMQSP) folds into the SANT domain. K257 is subject to N6-acetyllysine; by GCN5. The stretch at 365–386 (QSKEEHKELIKKVIEEHQILRR) forms a coiled coil. Residues 461–548 (PRIYSGLDTW…LVHKGIGDST (88 aa)) form the SWIRM domain.

As to quaternary structure, interacts in vitro with the HAT domain of GCN5 and with the DNA-binding domain of the transcriptional activator DREB1B/CBF1. In terms of processing, acetylated in vitro by GCN5, but acetylation is not essential for biological activity. In terms of tissue distribution, expressed in roots and leaves.

Its subcellular location is the nucleus. Functionally, required for the function of some acidic activation domains, which activate transcription from a distant site. The exact mechanism of action is not yet known. ADA2 stimulates the acetyltransferase activity of GCN5 on free histones or nucleosomes, probably by opening up the promoter region. This Arabidopsis thaliana (Mouse-ear cress) protein is Transcriptional adapter ADA2a (ADA2A).